The chain runs to 75 residues: Cytochrome c oxidase subunit 6C (75 aa).

The Mitochondrial matrix segment spans residues Met1–Gly13. A helical transmembrane segment spans residues Leu14–Arg54. Topologically, residues Asn55–Lys75 are mitochondrial intermembrane.

This sequence belongs to the cytochrome c oxidase subunit 6c family. Component of the cytochrome c oxidase (complex IV, CIV), a multisubunit enzyme composed of 14 subunits. The complex is composed of a catalytic core of 3 subunits MT-CO1, MT-CO2 and MT-CO3, encoded in the mitochondrial DNA, and 11 supernumerary subunits COX4I1 (or COX4I2), COX5A, COX5B, COX6A1 (or COX6A2), COX6B1 (or COX6B2), COX6C, COX7A2 (or COX7A1), COX7B, COX7C, COX8A and NDUFA4, which are encoded in the nuclear genome. The complex exists as a monomer or a dimer and forms supercomplexes (SCs) in the inner mitochondrial membrane with NADH-ubiquinone oxidoreductase (complex I, CI) and ubiquinol-cytochrome c oxidoreductase (cytochrome b-c1 complex, complex III, CIII), resulting in different assemblies (supercomplex SCI(1)III(2)IV(1) and megacomplex MCI(2)III(2)IV(2)).

The protein resides in the mitochondrion inner membrane. The protein operates within energy metabolism; oxidative phosphorylation. Its function is as follows. Component of the cytochrome c oxidase, the last enzyme in the mitochondrial electron transport chain which drives oxidative phosphorylation. The respiratory chain contains 3 multisubunit complexes succinate dehydrogenase (complex II, CII), ubiquinol-cytochrome c oxidoreductase (cytochrome b-c1 complex, complex III, CIII) and cytochrome c oxidase (complex IV, CIV), that cooperate to transfer electrons derived from NADH and succinate to molecular oxygen, creating an electrochemical gradient over the inner membrane that drives transmembrane transport and the ATP synthase. Cytochrome c oxidase is the component of the respiratory chain that catalyzes the reduction of oxygen to water. Electrons originating from reduced cytochrome c in the intermembrane space (IMS) are transferred via the dinuclear copper A center (CU(A)) of subunit 2 and heme A of subunit 1 to the active site in subunit 1, a binuclear center (BNC) formed by heme A3 and copper B (CU(B)). The BNC reduces molecular oxygen to 2 water molecules using 4 electrons from cytochrome c in the IMS and 4 protons from the mitochondrial matrix. The polypeptide is Cytochrome c oxidase subunit 6C (COX6C) (Homo sapiens (Human)).